Consider the following 320-residue polypeptide: Metapyrocatechase 2 (320 aa).

2 disordered regions span residues 1 to 21 (MDTH…RPRH) and 131 to 153 (GPKT…GQRG). VOC domains lie at 25 to 131 (SIDH…VKIG) and 167 to 282 (RLSH…YSAD). H170, H227, and E278 together coordinate Fe cation.

The protein belongs to the extradiol ring-cleavage dioxygenase family. Requires Fe(2+) as cofactor.

It catalyses the reaction catechol + O2 = (2Z,4E)-2-hydroxy-6-oxohexa-2,4-dienoate + H(+). This Cupriavidus necator (Alcaligenes eutrophus) protein is Metapyrocatechase 2 (mcpII).